The chain runs to 152 residues: Endoribonuclease YbeY (152 aa).

Zn(2+) is bound by residues His-116, His-120, and His-126.

Belongs to the endoribonuclease YbeY family. Requires Zn(2+) as cofactor.

The protein localises to the cytoplasm. Functionally, single strand-specific metallo-endoribonuclease involved in late-stage 70S ribosome quality control and in maturation of the 3' terminus of the 16S rRNA. In Mycoplasma mobile (strain ATCC 43663 / 163K / NCTC 11711) (Mesomycoplasma mobile), this protein is Endoribonuclease YbeY.